A 417-amino-acid polypeptide reads, in one-letter code: Glucose-1-phosphate adenylyltransferase (417 aa).

Residues tyrosine 105, glycine 170, 185-186 (EK), and serine 203 contribute to the alpha-D-glucose 1-phosphate site.

The protein belongs to the bacterial/plant glucose-1-phosphate adenylyltransferase family. In terms of assembly, homotetramer.

It catalyses the reaction alpha-D-glucose 1-phosphate + ATP + H(+) = ADP-alpha-D-glucose + diphosphate. It functions in the pathway glycan biosynthesis; glycogen biosynthesis. In terms of biological role, involved in the biosynthesis of ADP-glucose, a building block required for the elongation reactions to produce glycogen. Catalyzes the reaction between ATP and alpha-D-glucose 1-phosphate (G1P) to produce pyrophosphate and ADP-Glc. The chain is Glucose-1-phosphate adenylyltransferase from Granulibacter bethesdensis (strain ATCC BAA-1260 / CGDNIH1).